The following is a 440-amino-acid chain: D-serine dehydratase (440 aa).

At Lys-116 the chain carries N6-(pyridoxal phosphate)lysine.

The protein belongs to the serine/threonine dehydratase family. DsdA subfamily. In terms of assembly, monomer. Pyridoxal 5'-phosphate is required as a cofactor.

The enzyme catalyses D-serine = pyruvate + NH4(+). This Salmonella schwarzengrund (strain CVM19633) protein is D-serine dehydratase.